Consider the following 98-residue polypeptide: MALTKAELAENLFDKLGFSKRDAKETVEVFFEEIRKALESGEQVKLSGFGNFDLRDKNERPGRNPKTGEDIPITARRVVTFRPGQKLKARVENLKKEQ.

A disordered region spans residues 51–71 (NFDLRDKNERPGRNPKTGEDI). Residues 53–69 (DLRDKNERPGRNPKTGE) are compositionally biased toward basic and acidic residues.

The protein belongs to the bacterial histone-like protein family. Heterodimer of an alpha and a beta chain.

In terms of biological role, this protein is one of the two subunits of integration host factor, a specific DNA-binding protein that functions in genetic recombination as well as in transcriptional and translational control. The sequence is that of Integration host factor subunit alpha from Vibrio parahaemolyticus serotype O3:K6 (strain RIMD 2210633).